The following is a 379-amino-acid chain: Transcription termination factor Rho (379 aa).

One can recognise a Rho RNA-BD domain in the interval 1-68 (MTDKYGFLRS…KRIFQINGRF (68 aa)). ATP is bound by residues 111–116 (GKGQRG), 123–128 (KTGKTT), and R154.

The protein belongs to the Rho family. As to quaternary structure, homohexamer. The homohexamer assembles into an open ring structure.

Facilitates transcription termination by a mechanism that involves Rho binding to the nascent RNA, activation of Rho's RNA-dependent ATPase activity, and release of the mRNA from the DNA template. The protein is Transcription termination factor Rho of Karelsulcia muelleri (strain SMDSEM) (Sulcia muelleri).